We begin with the raw amino-acid sequence, 143 residues long: Cell division protein SepF (143 aa).

Belongs to the SepF family. In terms of assembly, homodimer. Interacts with FtsZ.

The protein localises to the cytoplasm. Functionally, cell division protein that is part of the divisome complex and is recruited early to the Z-ring. Probably stimulates Z-ring formation, perhaps through the cross-linking of FtsZ protofilaments. Its function overlaps with FtsA. The polypeptide is Cell division protein SepF (Geobacillus thermodenitrificans (strain NG80-2)).